Reading from the N-terminus, the 148-residue chain is uncharacterized protein (148 aa).

It is found in the plastid. The protein localises to the chloroplast. This is an uncharacterized protein from Porphyra purpurea (Red seaweed).